Reading from the N-terminus, the 549-residue chain is Hydroxylamine reductase (549 aa).

4 residues coordinate [4Fe-4S] cluster: C5, C8, C17, and C23. Residues H242, E266, C310, C402, C430, C455, E490, and K492 each coordinate hybrid [4Fe-2O-2S] cluster. C402 is modified (cysteine persulfide).

It belongs to the HCP family. It depends on [4Fe-4S] cluster as a cofactor. Hybrid [4Fe-2O-2S] cluster is required as a cofactor.

It localises to the cytoplasm. It carries out the reaction A + NH4(+) + H2O = hydroxylamine + AH2 + H(+). Functionally, catalyzes the reduction of hydroxylamine to form NH(3) and H(2)O. The sequence is that of Hydroxylamine reductase from Clostridium novyi (strain NT).